An 88-amino-acid polypeptide reads, in one-letter code: Small ribosomal subunit protein uS15c (88 aa).

This sequence belongs to the universal ribosomal protein uS15 family. As to quaternary structure, part of the 30S ribosomal subunit.

The protein resides in the plastid. The protein localises to the chloroplast. This Lepidium virginicum (Virginia pepperweed) protein is Small ribosomal subunit protein uS15c (rps15).